Consider the following 153-residue polypeptide: Regulatory protein RecX (153 aa).

The protein belongs to the RecX family.

It localises to the cytoplasm. In terms of biological role, modulates RecA activity. The chain is Regulatory protein RecX from Neisseria meningitidis serogroup C / serotype 2a (strain ATCC 700532 / DSM 15464 / FAM18).